The primary structure comprises 288 residues: Phosphatidylserine decarboxylase proenzyme (288 aa).

Residues aspartate 95, histidine 152, and serine 255 each act as charge relay system; for autoendoproteolytic cleavage activity in the active site. Serine 255 acts as the Schiff-base intermediate with substrate; via pyruvic acid; for decarboxylase activity in catalysis. Position 255 is a pyruvic acid (Ser); by autocatalysis (serine 255).

This sequence belongs to the phosphatidylserine decarboxylase family. PSD-B subfamily. Prokaryotic type I sub-subfamily. Heterodimer of a large membrane-associated beta subunit and a small pyruvoyl-containing alpha subunit. The cofactor is pyruvate. Is synthesized initially as an inactive proenzyme. Formation of the active enzyme involves a self-maturation process in which the active site pyruvoyl group is generated from an internal serine residue via an autocatalytic post-translational modification. Two non-identical subunits are generated from the proenzyme in this reaction, and the pyruvate is formed at the N-terminus of the alpha chain, which is derived from the carboxyl end of the proenzyme. The autoendoproteolytic cleavage occurs by a canonical serine protease mechanism, in which the side chain hydroxyl group of the serine supplies its oxygen atom to form the C-terminus of the beta chain, while the remainder of the serine residue undergoes an oxidative deamination to produce ammonia and the pyruvoyl prosthetic group on the alpha chain. During this reaction, the Ser that is part of the protease active site of the proenzyme becomes the pyruvoyl prosthetic group, which constitutes an essential element of the active site of the mature decarboxylase.

Its subcellular location is the cell membrane. The catalysed reaction is a 1,2-diacyl-sn-glycero-3-phospho-L-serine + H(+) = a 1,2-diacyl-sn-glycero-3-phosphoethanolamine + CO2. The protein operates within phospholipid metabolism; phosphatidylethanolamine biosynthesis; phosphatidylethanolamine from CDP-diacylglycerol: step 2/2. Functionally, catalyzes the formation of phosphatidylethanolamine (PtdEtn) from phosphatidylserine (PtdSer). This is Phosphatidylserine decarboxylase proenzyme from Methylococcus capsulatus (strain ATCC 33009 / NCIMB 11132 / Bath).